The primary structure comprises 329 residues: tRNA pseudouridine synthase B (329 aa).

Asp-42 serves as the catalytic Nucleophile.

Belongs to the pseudouridine synthase TruB family. Type 1 subfamily.

It carries out the reaction uridine(55) in tRNA = pseudouridine(55) in tRNA. Responsible for synthesis of pseudouridine from uracil-55 in the psi GC loop of transfer RNAs. This is tRNA pseudouridine synthase B from Lactococcus lactis subsp. lactis (strain IL1403) (Streptococcus lactis).